Consider the following 617-residue polypeptide: pH-sensitive chloride channel 2 (617 aa).

The signal sequence occupies residues 1–28 (MHSPGAAAYVFLQCLVALVAAVIAQSGA). At 29 to 387 (DQPPTTVVEV…VHLAREMGFY (359 aa)) the chain is on the extracellular side. N-linked (GlcNAc...) asparagine glycosylation occurs at asparagine 57. Positions 82–96 (TVSVDSSSTTTVAST) are enriched in low complexity. Positions 82–110 (TVSVDSSSTTTVASTQEPTSTTERTMSPE) are disordered. Residues 97 to 106 (QEPTSTTERT) are compositionally biased toward polar residues. Asparagine 130 carries an N-linked (GlcNAc...) asparagine glycan. Positions 131 to 147 (ATDDNRPDAKSSGKDSE) are enriched in basic and acidic residues. Residues 131-155 (ATDDNRPDAKSSGKDSECPTLEGAD) are disordered. N-linked (GlcNAc...) asparagine glycosylation is found at asparagine 184, asparagine 234, asparagine 351, and asparagine 370. Residues 388–408 (MMDYFIPSIMLVAISWVTFWL) traverse the membrane as a helical segment. Over 409 to 414 (QADQSA) the chain is Cytoplasmic. A helical transmembrane segment spans residues 415 to 434 (PRITLGTSTMLTFITLASAQ). Over 435 to 447 (GKTLPKVSYIKAS) the chain is Extracellular. Residues 448–468 (EIWFLGCTGFIFGSLVEFAFV) form a helical membrane-spanning segment. The Cytoplasmic portion of the chain corresponds to 469-596 (NTIWRRKRNV…VAIWIDKRSR (128 aa)). A helical transmembrane segment spans residues 597–617 (FVFPIAFVIFNIFYWTFVYYV).

It belongs to the ligand-gated ion channel (TC 1.A.9) family.

It is found in the cell membrane. The enzyme catalyses chloride(in) = chloride(out). Functionally, ligand and pH-gated channel that mediates chloride transport in the mid-gut and thereby may function in larval metabolism and fluid homeostasis. Channel opening is triggered by zinc binding or, to a lesser extent, an increase in extracellular pH. The polypeptide is pH-sensitive chloride channel 2 (Anopheles gambiae (African malaria mosquito)).